Reading from the N-terminus, the 444-residue chain is Tubulin beta chain (444 aa).

Residues glutamine 11, glutamate 69, serine 138, glycine 142, threonine 143, glycine 144, asparagine 204, and asparagine 226 each coordinate GTP. Glutamate 69 contacts Mg(2+).

Belongs to the tubulin family. Dimer of alpha and beta chains. A typical microtubule is a hollow water-filled tube with an outer diameter of 25 nm and an inner diameter of 15 nM. Alpha-beta heterodimers associate head-to-tail to form protofilaments running lengthwise along the microtubule wall with the beta-tubulin subunit facing the microtubule plus end conferring a structural polarity. Microtubules usually have 13 protofilaments but different protofilament numbers can be found in some organisms and specialized cells. Mg(2+) is required as a cofactor.

The protein resides in the cytoplasm. The protein localises to the cytoskeleton. In terms of biological role, tubulin is the major constituent of microtubules, a cylinder consisting of laterally associated linear protofilaments composed of alpha- and beta-tubulin heterodimers. Microtubules grow by the addition of GTP-tubulin dimers to the microtubule end, where a stabilizing cap forms. Below the cap, tubulin dimers are in GDP-bound state, owing to GTPase activity of alpha-tubulin. The protein is Tubulin beta chain (TBB) of Onchocerca gibsoni.